Reading from the N-terminus, the 367-residue chain is Methylthioribose-1-phosphate isomerase (367 aa).

Residues 48 to 50, Arg91, and Gln215 contribute to the substrate site; that span reads RGA. Asp256 acts as the Proton donor in catalysis. Position 266-267 (266-267) interacts with substrate; that stretch reads NK.

It belongs to the eIF-2B alpha/beta/delta subunits family. MtnA subfamily.

The catalysed reaction is 5-(methylsulfanyl)-alpha-D-ribose 1-phosphate = 5-(methylsulfanyl)-D-ribulose 1-phosphate. The protein operates within amino-acid biosynthesis; L-methionine biosynthesis via salvage pathway; L-methionine from S-methyl-5-thio-alpha-D-ribose 1-phosphate: step 1/6. In terms of biological role, catalyzes the interconversion of methylthioribose-1-phosphate (MTR-1-P) into methylthioribulose-1-phosphate (MTRu-1-P). The protein is Methylthioribose-1-phosphate isomerase of Syntrophus aciditrophicus (strain SB).